An 892-amino-acid chain; its full sequence is Alanine--tRNA ligase (892 aa).

Histidine 596, histidine 600, cysteine 700, and histidine 704 together coordinate Zn(2+).

Belongs to the class-II aminoacyl-tRNA synthetase family. Zn(2+) is required as a cofactor.

It is found in the cytoplasm. The enzyme catalyses tRNA(Ala) + L-alanine + ATP = L-alanyl-tRNA(Ala) + AMP + diphosphate. In terms of biological role, catalyzes the attachment of alanine to tRNA(Ala) in a two-step reaction: alanine is first activated by ATP to form Ala-AMP and then transferred to the acceptor end of tRNA(Ala). Also edits incorrectly charged Ser-tRNA(Ala) and Gly-tRNA(Ala) via its editing domain. This Methanococcus vannielii (strain ATCC 35089 / DSM 1224 / JCM 13029 / OCM 148 / SB) protein is Alanine--tRNA ligase.